Consider the following 270-residue polypeptide: Probable thioesterase BOA10 (270 aa).

It belongs to the AMT4 thioesterase family.

It functions in the pathway polyketide biosynthesis. Probable thioesterase; part of the gene cluster B that mediates the biosynthesis of botcinic acid and its botcinin derivatives, acetate-derived polyketides that contribute to virulence when combined with the sesquiterpene botrydial. Botcinic acid and its derivatives have been shown to induce chlorosis and necrosis during host plant infection, but also have antifungal activities. Two polyketide synthases, BOA6 and BOA9, are involved in the biosynthesis of botcinins. BOA6 mediates the formation of the per-methylated tetraketide core by condensation of four units of malonyl-CoA with one unit of acetyl-CoA, which would be methylated in activated methylene groups to yield a bicyclic acid intermediate that could then either be converted to botrylactone derivatives or lose the starter acetate unit through a retro-Claisen type C-C bond cleavage to yield botcinin derivatives. The second polyketide synthase, BOA9, is probably required for the biosynthesis of the tetraketide side chain of botcinins. The methyltransferase (MT) domain within BOA6 is probably responsible for the incorporation of four methyl groups. The trans-enoyl reductase BOA5 might take over the enoyl reductase function of BOA6 that misses an ER domain. The monooxygenases BOA2, BOA3 and BOA4 might be involved in further hydroxylations at C4, C5 and C8, whereas BOA7, close to BOA9, could potentially be involved in the hydroxylation at C4 in the side chain of botcinins. This Botryotinia fuckeliana (strain B05.10) (Noble rot fungus) protein is Probable thioesterase BOA10.